A 356-amino-acid chain; its full sequence is Tetraacyldisaccharide 4'-kinase (356 aa).

Position 51–58 (51–58) interacts with ATP; it reads GWGGSGKT.

This sequence belongs to the LpxK family.

It catalyses the reaction a lipid A disaccharide + ATP = a lipid IVA + ADP + H(+). It participates in glycolipid biosynthesis; lipid IV(A) biosynthesis; lipid IV(A) from (3R)-3-hydroxytetradecanoyl-[acyl-carrier-protein] and UDP-N-acetyl-alpha-D-glucosamine: step 6/6. In terms of biological role, transfers the gamma-phosphate of ATP to the 4'-position of a tetraacyldisaccharide 1-phosphate intermediate (termed DS-1-P) to form tetraacyldisaccharide 1,4'-bis-phosphate (lipid IVA). This Oleidesulfovibrio alaskensis (strain ATCC BAA-1058 / DSM 17464 / G20) (Desulfovibrio alaskensis) protein is Tetraacyldisaccharide 4'-kinase.